The following is a 195-amino-acid chain: Probable nicotinate-nucleotide adenylyltransferase (195 aa).

The protein belongs to the NadD family.

The enzyme catalyses nicotinate beta-D-ribonucleotide + ATP + H(+) = deamido-NAD(+) + diphosphate. Its pathway is cofactor biosynthesis; NAD(+) biosynthesis; deamido-NAD(+) from nicotinate D-ribonucleotide: step 1/1. Catalyzes the reversible adenylation of nicotinate mononucleotide (NaMN) to nicotinic acid adenine dinucleotide (NaAD). The sequence is that of Probable nicotinate-nucleotide adenylyltransferase from Chlorobaculum parvum (strain DSM 263 / NCIMB 8327) (Chlorobium vibrioforme subsp. thiosulfatophilum).